The sequence spans 190 residues: Translation initiation factor IF-3 (190 aa).

Belongs to the IF-3 family. As to quaternary structure, monomer.

The protein resides in the cytoplasm. Its function is as follows. IF-3 binds to the 30S ribosomal subunit and shifts the equilibrium between 70S ribosomes and their 50S and 30S subunits in favor of the free subunits, thus enhancing the availability of 30S subunits on which protein synthesis initiation begins. The polypeptide is Translation initiation factor IF-3 (Prochlorococcus marinus (strain AS9601)).